A 514-amino-acid polypeptide reads, in one-letter code: 6-phosphofructo-2-kinase/fructose-2,6-bisphosphatase 3 (514 aa).

Residues 1–245 are 6-phosphofructo-2-kinase; sequence MPLELTQSRV…VYYLMNIHVQ (245 aa). An ATP-binding site is contributed by 42-50; that stretch reads GLPARGKTY. Residues Arg-75 and Arg-99 each contribute to the beta-D-fructose 6-phosphate site. Asp-125 is a catalytic residue. Thr-127 and Arg-133 together coordinate beta-D-fructose 6-phosphate. Cys-155 is an active-site residue. 164–169 contributes to the ATP binding site; sequence NIMEVK. Lys-169, Arg-190, and Tyr-194 together coordinate beta-D-fructose 6-phosphate. Positions 246 to 514 are fructose-2,6-bisphosphatase; it reads PRTIYLCRHG…QPLLGQACLT (269 aa). Residue Arg-253 coordinates beta-D-fructose 2,6-bisphosphate. His-254 (tele-phosphohistidine intermediate) is an active-site residue. Beta-D-fructose 2,6-bisphosphate-binding residues include Asn-260 and Gly-266. Glu-323 (proton donor/acceptor) is an active-site residue. Tyr-334, Arg-348, Lys-352, Tyr-363, Gln-389, and Arg-393 together coordinate beta-D-fructose 2,6-bisphosphate. 345-348 provides a ligand contact to ATP; it reads YALR. ATP-binding positions include 389–393 and Tyr-425; that span reads QAVLR. A disordered region spans residues 444-475; it reads ERSEDAKKGPNPLMRRNSVTPLASPEPTKKPR. Ser-461 is modified (phosphoserine; by AMPK and PKA). Thr-463 carries the phosphothreonine modification. Ser-467 carries the post-translational modification Phosphoserine. A Phosphothreonine; by PKC modification is found at Thr-471.

This sequence in the C-terminal section; belongs to the phosphoglycerate mutase family. Homodimer. Forms a heterodimer with PFKFB2. Phosphorylation by AMPK stimulates activity.

The catalysed reaction is beta-D-fructose 2,6-bisphosphate + H2O = beta-D-fructose 6-phosphate + phosphate. It carries out the reaction beta-D-fructose 6-phosphate + ATP = beta-D-fructose 2,6-bisphosphate + ADP + H(+). Functionally, catalyzes both the synthesis and degradation of fructose 2,6-bisphosphate. In Pongo abelii (Sumatran orangutan), this protein is 6-phosphofructo-2-kinase/fructose-2,6-bisphosphatase 3 (PFKFB3).